Consider the following 471-residue polypeptide: FAD-linked oxidoreductase sorD (471 aa).

Residues Met1–Ala23 form the signal peptide. Asn18, Asn29, Asn174, Asn279, and Asn351 each carry an N-linked (GlcNAc...) asparagine glycan. Residues Leu41 to Val212 enclose the FAD-binding PCMH-type domain.

The protein belongs to the oxygen-dependent FAD-linked oxidoreductase family. FAD serves as cofactor.

It functions in the pathway secondary metabolite biosynthesis. In terms of biological role, FAD-linked oxidoreductase; part of the gene cluster that mediates the biosynthesis of sorbicillinoids, a diverse group of yellow secondary metabolites that restrict growth of competing pathogenic fungi but not of bacteria. Sorbicillinoids biosynthesis requires the action of two PKSs. SorA iteratively combines three acetyl units and the growing chain is modified by the ketoacyl reductase subunit, and optional by the enoyl reductase subunit in the second cycle. The polyketide is then handed over to the PKS SorB, which adds three more acetyl units, and two methyl groups. SorB releases an aldehyde, which undergoes spontaneous cyclization resulting in the formation of sorbicillin or 2',3'-dihydrosorbicillin. The monooxygenase sorC oxidizes sorbicillin and 2',3'-dihydrosorbicillin to 2',3'-dihydrosorbicillinol and sorbicillinol, respectively. The oxidoreductase sorD further converts sorbicillinol into oxosorbicillinol. Sorbicillinol is the building block for the other sorbicillinoids such as disorbicillinol, bisvertinolon, and dihydrobisvertinolone. The sequence is that of FAD-linked oxidoreductase sorD from Penicillium rubens (strain ATCC 28089 / DSM 1075 / NRRL 1951 / Wisconsin 54-1255) (Penicillium chrysogenum).